A 430-amino-acid polypeptide reads, in one-letter code: Adenylosuccinate synthetase (430 aa).

Residues 12 to 18 and 40 to 42 each bind GTP; these read GDEGKGK and GHT. The active-site Proton acceptor is the D13. Residues D13 and G40 each contribute to the Mg(2+) site. Residues 13-16, 38-41, T130, R144, Q224, T239, and R303 contribute to the IMP site; these read DEGK and NAGH. Residue H41 is the Proton donor of the active site. 299 to 305 provides a ligand contact to substrate; that stretch reads TVTGRKR. Residues R305, 331–333, and 413–415 each bind GTP; these read KLD and STS.

This sequence belongs to the adenylosuccinate synthetase family. As to quaternary structure, homodimer. The cofactor is Mg(2+).

Its subcellular location is the cytoplasm. The enzyme catalyses IMP + L-aspartate + GTP = N(6)-(1,2-dicarboxyethyl)-AMP + GDP + phosphate + 2 H(+). It functions in the pathway purine metabolism; AMP biosynthesis via de novo pathway; AMP from IMP: step 1/2. In terms of biological role, plays an important role in the de novo pathway of purine nucleotide biosynthesis. Catalyzes the first committed step in the biosynthesis of AMP from IMP. This Cereibacter sphaeroides (strain ATCC 17025 / ATH 2.4.3) (Rhodobacter sphaeroides) protein is Adenylosuccinate synthetase.